Consider the following 84-residue polypeptide: Small ribosomal subunit protein uS17 (84 aa).

Belongs to the universal ribosomal protein uS17 family. Part of the 30S ribosomal subunit.

One of the primary rRNA binding proteins, it binds specifically to the 5'-end of 16S ribosomal RNA. The protein is Small ribosomal subunit protein uS17 of Actinobacillus pleuropneumoniae serotype 5b (strain L20).